The following is a 246-amino-acid chain: Probable transcriptional regulatory protein CLB_3102 (246 aa).

Belongs to the TACO1 family.

The protein resides in the cytoplasm. The chain is Probable transcriptional regulatory protein CLB_3102 from Clostridium botulinum (strain ATCC 19397 / Type A).